A 146-amino-acid polypeptide reads, in one-letter code: Flavodoxin (146 aa).

In terms of domain architecture, Flavodoxin-like spans 4–143; the sequence is SLIVYGSTTG…EIVSWGSGIA (140 aa).

This sequence belongs to the flavodoxin family. FMN serves as cofactor.

Functionally, low-potential electron donor to a number of redox enzymes. This chain is Flavodoxin, found in Maridesulfovibrio salexigens (strain ATCC 14822 / DSM 2638 / NCIMB 8403 / VKM B-1763) (Desulfovibrio salexigens).